We begin with the raw amino-acid sequence, 164 residues long: Pyruvoyl-dependent arginine decarboxylase (164 aa).

Ser-52 is modified (pyruvic acid (Ser)).

The protein belongs to the PdaD family. The cofactor is pyruvate.

The catalysed reaction is L-arginine + H(+) = agmatine + CO2. This Methanococcus vannielii (strain ATCC 35089 / DSM 1224 / JCM 13029 / OCM 148 / SB) protein is Pyruvoyl-dependent arginine decarboxylase.